Reading from the N-terminus, the 500-residue chain is Serine carboxypeptidase 3 (500 aa).

Residues methionine 1–alanine 21 form the signal peptide. Residues glycine 22–threonine 73 constitute a propeptide that is removed on maturation. 3 cysteine pairs are disulfide-bonded: cysteine 126-cysteine 366, cysteine 294-cysteine 309, and cysteine 332-cysteine 337. N-linked (GlcNAc...) asparagine glycosylation occurs at asparagine 144. The active site involves serine 216. Residue aspartate 404 is part of the active site. Residue cysteine 407 coordinates substrate. Histidine 461 is an active-site residue. The propeptide occupies glutamate 485 to isoleucine 500.

This sequence belongs to the peptidase S10 family. In terms of assembly, monomer.

It catalyses the reaction Release of a C-terminal amino acid with broad specificity.. The protein is Serine carboxypeptidase 3 (CBP3) of Triticum aestivum (Wheat).